The sequence spans 131 residues: Small ribosomal subunit protein bS18 (131 aa).

Residues 1-10 (MSNGTDSKTA) are compositionally biased toward polar residues. Residues 1-60 (MSNGTDSKTASAPPARSGGGFGGGGSRGGDRGDRGDRGGDRGDRGGGLGGDDDKRGGGRG) form a disordered region. The span at 17–27 (SGGGFGGGGSR) shows a compositional bias: gly residues. The segment covering 28-44 (GGDRGDRGDRGGDRGDR) has biased composition (basic and acidic residues).

The protein belongs to the bacterial ribosomal protein bS18 family. In terms of assembly, part of the 30S ribosomal subunit. Forms a tight heterodimer with protein bS6.

Functionally, binds as a heterodimer with protein bS6 to the central domain of the 16S rRNA, where it helps stabilize the platform of the 30S subunit. The polypeptide is Small ribosomal subunit protein bS18 (Myxococcus xanthus (strain DK1622)).